We begin with the raw amino-acid sequence, 291 residues long: Undecaprenyl-diphosphatase (291 aa).

The next 8 helical transmembrane spans lie at 1-21, 48-68, 99-119, 123-143, 159-179, 200-220, 236-256, and 269-289; these read MLILELIKGIILGIVEGLTEF, SAFTFKIVIQLGSVFAGAWVF, LHIIVGMIPAGVLGLLFDDVI, LFSVPTVMIGLFIGAIYMIIA, INYFQAFVIGLSQAIAMWPGF, SDFTFIMAVPVMLAASGLSLV, LGFLAAFIVGLIAIKTFLYLI, and IVLVIIIAILYFGFGIGQGIT.

Belongs to the UppP family.

It is found in the cell membrane. It catalyses the reaction di-trans,octa-cis-undecaprenyl diphosphate + H2O = di-trans,octa-cis-undecaprenyl phosphate + phosphate + H(+). Catalyzes the dephosphorylation of undecaprenyl diphosphate (UPP). Confers resistance to bacitracin. The protein is Undecaprenyl-diphosphatase of Staphylococcus saprophyticus subsp. saprophyticus (strain ATCC 15305 / DSM 20229 / NCIMB 8711 / NCTC 7292 / S-41).